A 382-amino-acid polypeptide reads, in one-letter code: Mating-type protein a-1 (382 aa).

A DNA-binding region (HMG box) is located at residues 116–184 (IPRPPNAYIL…RLLLENPDYR (69 aa)).

In terms of assembly, binds in vitro to DNA containing a specific core sequence 5'-CTTTG-3'.

The protein localises to the nucleus. Functionally, mating type proteins are sequence specific DNA-binding proteins that act as master switches in yeast differentiation by controlling gene expression in a cell type-specific fashion. Transcriptional activator that induces the transcription of a-specific genes like mating factor mfa-1. Required for mating as an a-cell, blocking of heterokaryon formation (vegetative incompatibility) and for perithecium induction. The polypeptide is Mating-type protein a-1 (mta-1) (Neurospora crassa).